Here is a 344-residue protein sequence, read N- to C-terminus: Phosphoribosylformylglycinamidine cyclo-ligase (344 aa).

It belongs to the AIR synthase family.

It localises to the cytoplasm. The catalysed reaction is 2-formamido-N(1)-(5-O-phospho-beta-D-ribosyl)acetamidine + ATP = 5-amino-1-(5-phospho-beta-D-ribosyl)imidazole + ADP + phosphate + H(+). It functions in the pathway purine metabolism; IMP biosynthesis via de novo pathway; 5-amino-1-(5-phospho-D-ribosyl)imidazole from N(2)-formyl-N(1)-(5-phospho-D-ribosyl)glycinamide: step 2/2. The polypeptide is Phosphoribosylformylglycinamidine cyclo-ligase (Synechococcus sp. (strain RCC307)).